A 299-amino-acid chain; its full sequence is Large ribosomal subunit protein eL22 (299 aa).

Disordered stretches follow at residues 1–142 (MAPT…AAPA) and 155–178 (VAKPAPKPKAKAAPAPSKVVKKNV). Basic and acidic residues-rich tracts occupy residues 33–42 (GKVEKPKAEA) and 55–64 (KASEAAKDVK). Composition is skewed to low complexity over residues 65-98 (AAAAAAKPAAAKPAAAKPAAASKDAGKKAPAAAA) and 105-142 (AAAAPAPAKAAPAKKAASTPAAAPPAKKAAPAKAAAPA).

This sequence belongs to the eukaryotic ribosomal protein eL22 family.

This is Large ribosomal subunit protein eL22 (RpL22) from Drosophila melanogaster (Fruit fly).